A 237-amino-acid polypeptide reads, in one-letter code: CD209 antigen-like protein D (237 aa).

Over 1–54 the chain is Cytoplasmic; that stretch reads MSDSMESKTQQVVIPEDEECLMSGTRYSDISSRLQTKFGIKSLAEYTKQSRNPL. Residues 55–75 traverse the membrane as a helical; Signal-anchor for type II membrane protein segment; that stretch reads VLQLLSFLFLAGLLLIILILV. The Extracellular portion of the chain corresponds to 76–237; sequence SKVPSSEVQN…KVSTSSCTTK (162 aa). An intrachain disulfide couples Cys-106 to Cys-117. Residues 112 to 227 form the C-type lectin domain; sequence FFNGSCYFFS…CDKLLFWICK (116 aa). Asn-114 and Asn-129 each carry an N-linked (GlcNAc...) asparagine glycan. Disulfide bonds link Cys-134–Cys-226 and Cys-205–Cys-218. Ca(2+) is bound by residues Glu-196, Asn-198, Glu-203, Asn-214, and Asp-215.

Its subcellular location is the membrane. Probable pathogen-recognition receptor. May mediate the endocytosis of pathogens which are subsequently degraded in lysosomal compartments. May recognize in a calcium-dependent manner high mannose N-linked oligosaccharides in a variety of pathogen antigens. This Mus musculus (Mouse) protein is CD209 antigen-like protein D (Cd209d).